The chain runs to 171 residues: Peptidyl-prolyl cis-trans isomerase slr1251 (171 aa).

One can recognise a PPIase cyclophilin-type domain in the interval 6–169; that stretch reads FFDITIGSDT…QAIVISDCGE (164 aa).

Belongs to the cyclophilin-type PPIase family.

The catalysed reaction is [protein]-peptidylproline (omega=180) = [protein]-peptidylproline (omega=0). PPIases accelerate the folding of proteins. It catalyzes the cis-trans isomerization of proline imidic peptide bonds in oligopeptides. The chain is Peptidyl-prolyl cis-trans isomerase slr1251 from Synechocystis sp. (strain ATCC 27184 / PCC 6803 / Kazusa).